The sequence spans 483 residues: Septin-8 (483 aa).

Over residues 1–16 (MAATDLERFSNAEPEP) the composition is skewed to basic and acidic residues. The segment at 1 to 22 (MAATDLERFSNAEPEPRSLSLG) is disordered. Residue alanine 2 is modified to N-acetylalanine. A Phosphoserine modification is found at serine 10. Residues 41–307 (QGFSFNILCV…ELYRRCKLEE (267 aa)) enclose the Septin-type G domain. A G1 motif region spans residues 51–58 (GETGIGKS). GTP contacts are provided by residues 51–58 (GETGIGKS), glycine 106, 187–195 (KADTISKSE), glycine 241, and arginine 256. A G3 motif region spans residues 103–106 (DAVG). The tract at residues 186–189 (AKAD) is G4 motif. Residues 320-413 (FSLQETYEAK…AVEALQSQAL (94 aa)) are a coiled coil. Residues 411-420 (QALHATSQQP) are compositionally biased toward polar residues. Residues 411-443 (QALHATSQQPLRKDKDKKNRSDIGAHQPGMSLS) form a disordered region. The span at 421-433 (LRKDKDKKNRSDI) shows a compositional bias: basic and acidic residues.

This sequence belongs to the TRAFAC class TrmE-Era-EngA-EngB-Septin-like GTPase superfamily. Septin GTPase family. As to quaternary structure, septins polymerize into heterooligomeric protein complexes that form filaments, and can associate with cellular membranes, actin filaments and microtubules. GTPase activity is required for filament formation. Interacts with CDK14. Interacts with SEPTIN5. Interacts with SEPTIN7. Interacts with SEPTIN4. Interacts with VAMP2; the interaction inhibits interaction of VAMP2 with SYP. Interacts with STX1A. Widely expressed, including in brain, heart and platelets; most abundant in aorta. Isoform 2 is expressed at low levels in specific brain areas, such as occipital pole, frontal lobe, temporal lobe and putamen. Isoform 1 and 3 are highly expressed in specific brain areas, such as occipital pole, frontal lobe, temporal lobe and putamen. Isoform 2 is highly expressed in prostate, testis and ovary. Isoform 1 and isoform 3 are expressed at low levels in prostate, testis and ovary.

It localises to the cytoplasm. It is found in the cytoskeleton. The protein localises to the synapse. The protein resides in the cell projection. Its subcellular location is the axon. It localises to the cytoplasmic vesicle. It is found in the secretory vesicle. The protein localises to the synaptic vesicle membrane. The protein resides in the presynapse. In terms of biological role, filament-forming cytoskeletal GTPase. May play a role in platelet secretion. Seems to participate in the process of SNARE complex formation in synaptic vesicles. Functionally, stabilizes BACE1 protein levels and promotes the sorting and accumulation of BACE1 to the recycling or endosomal compartments, modulating the beta-amyloidogenic processing of APP. In Homo sapiens (Human), this protein is Septin-8.